The chain runs to 448 residues: Bud neck protein 5 (448 aa).

Disordered regions lie at residues 63 to 103, 171 to 211, and 242 to 352; these read SGND…DPSQ, DDEW…TLGG, and GDNE…SSPI. Phosphoserine occurs at positions 70 and 179. Residues 171 to 180 show a composition bias toward acidic residues; that stretch reads DDEWEDEKSD. The segment covering 181 to 191 has biased composition (basic and acidic residues); it reads VEEGRVDKGTE. Residue serine 194 is modified to Phosphoserine. Positions 245–262 are enriched in basic and acidic residues; it reads EYNHESSRLADQTPHDDN. Threonine 257 bears the Phosphothreonine mark. The segment covering 264-281 has biased composition (polar residues); sequence ENCPNRSGGSTPLDSQTK. Phosphoserine is present on residues serine 270 and serine 273. Position 274 is a phosphothreonine (threonine 274). Residues 325-343 are compositionally biased toward low complexity; the sequence is SVSSNSNSRNGSRKSSLNK. Residues serine 332 and serine 340 each carry the phosphoserine modification. Tyrosine 344 carries the post-translational modification Phosphotyrosine. Phosphoserine occurs at positions 346 and 350.

In terms of assembly, component of the GIN4 complex composed of at least BNI5, CDC3, CDC10, CDC11, CDC12, GIN4, NAP1 and SHS1. Interacts directly with CDC11, CDC12 and SHS1.

The protein resides in the cytoplasm. It localises to the bud neck. Functionally, required for normal septin function and cytokinesis. Its recruitment to the bud neck by CDCd11 and SHS1 ensures efficient localization at the bud neck of MYO1, the type II myosin of the actomyosin contractile ring. In Saccharomyces cerevisiae (strain ATCC 204508 / S288c) (Baker's yeast), this protein is Bud neck protein 5.